The sequence spans 96 residues: RNA-binding protein Hfq (96 aa).

One can recognise a Sm domain in the interval 9–68; that stretch reads DPFLNALRRERVPVSIYLVNGIKLQGQIESFDQFVILLKNTVSQMVYKHAISTVVPSRPV. The tract at residues 64 to 96 is disordered; the sequence is PSRPVSHHSNTGTNQAGTNYSGGNATQQDDVAE. Polar residues predominate over residues 70-96; that stretch reads HHSNTGTNQAGTNYSGGNATQQDDVAE.

It belongs to the Hfq family. Homohexamer.

In terms of biological role, RNA chaperone that binds small regulatory RNA (sRNAs) and mRNAs to facilitate mRNA translational regulation in response to envelope stress, environmental stress and changes in metabolite concentrations. Also binds with high specificity to tRNAs. This Proteus mirabilis (strain HI4320) protein is RNA-binding protein Hfq.